A 91-amino-acid polypeptide reads, in one-letter code: Putative protein p22 (91 aa).

The protein is Putative protein p22 (22) of Escherichia coli (Bacteriophage APSE-1).